The following is a 489-amino-acid chain: MSNKAEKYSQLRSMIPEMRRVKHIYFVGIGGAGMGGIAEVLVNEGYKLSGSDIAESAVTQRLAQLGATIYIGHDASQVKGMDVVVVSTAISADNPELVAAKELRIPVVRRAEMLAELMRYRHGVAVAGTHGKTTTTSLIASIYGEAERDPTFVIGGLLNSAGTNARLGHSRYLIAEADESDASFLHLQPMVSVVTNIEADHMDTYEGDLEKLKTTFVDFLHNLPFYGVAVVCIDDPIVRELIPRIGRRIVTYGFSDDADVQALDFKQTGYSCEFTVKRAGLADLRLSVNLPGEHNVLNALAAIAVATEDDIEDAAIIKALAEFQGIGRRFQQIGEFATSKGEIKLVDDYGHHPSEVAATIKAARLGWPERRLVMIYQPHRYSRTRDLYEDFVEVLSQVDCLLMLDVYAAGEAPIPGADSRALCRSIRVRGQVEPVFVASTEQLETILPEILQGGDLLLTQGAGSIGLLSRSLTESNLGFAATGKDEKNA.

Position 128-134 (128-134 (GTHGKTT)) interacts with ATP.

It belongs to the MurCDEF family.

It is found in the cytoplasm. The enzyme catalyses UDP-N-acetyl-alpha-D-muramate + L-alanine + ATP = UDP-N-acetyl-alpha-D-muramoyl-L-alanine + ADP + phosphate + H(+). It functions in the pathway cell wall biogenesis; peptidoglycan biosynthesis. Cell wall formation. The protein is UDP-N-acetylmuramate--L-alanine ligase of Shewanella halifaxensis (strain HAW-EB4).